Consider the following 294-residue polypeptide: NAD kinase (294 aa).

Catalysis depends on Asp-72, which acts as the Proton acceptor. Residues Asp-72–Gly-73, Asn-146–Asp-147, Arg-157, Arg-174, Asp-176, Thr-187–Ser-192, and Gln-247 contribute to the NAD(+) site.

It belongs to the NAD kinase family. A divalent metal cation serves as cofactor.

It localises to the cytoplasm. The enzyme catalyses NAD(+) + ATP = ADP + NADP(+) + H(+). In terms of biological role, involved in the regulation of the intracellular balance of NAD and NADP, and is a key enzyme in the biosynthesis of NADP. Catalyzes specifically the phosphorylation on 2'-hydroxyl of the adenosine moiety of NAD to yield NADP. The polypeptide is NAD kinase (Marinobacter nauticus (strain ATCC 700491 / DSM 11845 / VT8) (Marinobacter aquaeolei)).